A 310-amino-acid chain; its full sequence is MFTDCSSSTTSRLIHLYNRNGVFLPRPSVSQFSLRTTASTWRCTLSIRSSSSPSAIVIDGKAEAKKIRDDIKIEVSRMKESIGVVPAEDSSEEEVLKYVSGFNDDPSVHGVLVQLPLPSHMDEQNILNAVSIEKDVDGFHPLNIGRLAMRGREPLFVPCTPKGCIELLHRYNIEFKGKRAVVIGRSNIVGMPAALLLQKEDATVSIIHSRTMNPEELTRQADILISAVGKPNMVRGSWIKPGAVLIDVGIKPVEDPSAAGGERLVGDICYVEASKIASAITPVPGDVGPMTIAMLLSNTLTSAKRIHNFQ.

The N-terminal 48 residues, Met-1–Arg-48, are a transit peptide targeting the chloroplast.

Belongs to the tetrahydrofolate dehydrogenase/cyclohydrolase family. Homodimer.

The protein resides in the plastid. Its subcellular location is the chloroplast. The catalysed reaction is (6R)-5,10-methylene-5,6,7,8-tetrahydrofolate + NADP(+) = (6R)-5,10-methenyltetrahydrofolate + NADPH. It catalyses the reaction (6R)-5,10-methenyltetrahydrofolate + H2O = (6R)-10-formyltetrahydrofolate + H(+). The protein operates within one-carbon metabolism; tetrahydrofolate interconversion. Catalyzes the oxidation of 5,10-methylenetetrahydrofolate to 5,10-methenyltetrahydrofolate and then the hydrolysis of 5,10-methenyltetrahydrofolate to 10-formyltetrahydrofolate. In Arabidopsis thaliana (Mouse-ear cress), this protein is Bifunctional protein FolD 3, chloroplastic (FOLD3).